The sequence spans 173 residues: Protein Rv3753c (173 aa).

The chain is Protein Rv3753c from Mycobacterium tuberculosis (strain ATCC 25618 / H37Rv).